We begin with the raw amino-acid sequence, 290 residues long: Appressoria-specific virulence factor GAS2 (290 aa).

A signal peptide spans 1–19; the sequence is MKYTSAILISAFAATNVFA. Asn-99 carries an N-linked (GlcNAc...) asparagine glycan. Positions 121 to 140 are disordered; sequence LPRAGGGTSTPKGTEETGVK.

Its subcellular location is the cytoplasm. Functionally, appressoria-specific virulence factor required for appressorial penetration in host and lesion development. The polypeptide is Appressoria-specific virulence factor GAS2 (Pyricularia oryzae (strain 70-15 / ATCC MYA-4617 / FGSC 8958) (Rice blast fungus)).